Here is a 285-residue protein sequence, read N- to C-terminus: Cell division protein DivIB (285 aa).

The span at 1–19 shows a compositional bias: basic and acidic residues; that stretch reads MNEKNKNDESKHQEDKLQD. The tract at residues 1–20 is disordered; sequence MNEKNKNDESKHQEDKLQDQ. At 1-66 the chain is on the cytoplasmic side; the sequence is MNEKNKNDES…NRFNAMERNS (66 aa). Residues 67–87 form a helical membrane-spanning segment; that stretch reads IHMIVILSIISLLLILLLSPL. In terms of domain architecture, POTRA spans 88-158; the sequence is MRFQKVEITG…QVAQIKIEEN (71 aa). Residues 88-285 are Extracellular-facing; sequence MRFQKVEITG…FQVGTYFQQY (198 aa).

It belongs to the FtsQ/DivIB family. DivIB subfamily.

The protein resides in the cell membrane. Its function is as follows. Cell division protein that may be involved in stabilizing or promoting the assembly of the division complex. The polypeptide is Cell division protein DivIB (Weissella koreensis (strain KACC 15510)).